We begin with the raw amino-acid sequence, 693 residues long: Elongation factor G 1 (693 aa).

One can recognise a tr-type G domain in the interval 4-281 (NKLRNIGISA…AVTRFLPSPH (278 aa)). GTP contacts are provided by residues 13–20 (AHIDSGKT), 80–84 (DTPGH), and 134–137 (NKCD).

Belongs to the TRAFAC class translation factor GTPase superfamily. Classic translation factor GTPase family. EF-G/EF-2 subfamily.

Its subcellular location is the cytoplasm. Catalyzes the GTP-dependent ribosomal translocation step during translation elongation. During this step, the ribosome changes from the pre-translocational (PRE) to the post-translocational (POST) state as the newly formed A-site-bound peptidyl-tRNA and P-site-bound deacylated tRNA move to the P and E sites, respectively. Catalyzes the coordinated movement of the two tRNA molecules, the mRNA and conformational changes in the ribosome. In Borreliella burgdorferi (strain ATCC 35210 / DSM 4680 / CIP 102532 / B31) (Borrelia burgdorferi), this protein is Elongation factor G 1 (fusA).